The primary structure comprises 230 residues: MKQFWSPSSINKNKAMVENLQNHGIVTSDEVAKAMEAVDRGVFVTDRSSAYVDSPMSIGYNVTISAPHMHAMCLQLLEKHLKPGMRVLDVGSGTGYLTACFAVMVGTEGRAIGVEHIPELVASSVKNIEASAASPFLKEGSLAVHVGDGRQGWAEFAPYDAIHVGAAAPEIPEALIDQLKPGGRLVIPVGNIFQDLQVVDKNSDGSVSIKDETSVRYVPLTSREAQLRGD.

The active site involves Ser65.

It belongs to the methyltransferase superfamily. L-isoaspartyl/D-aspartyl protein methyltransferase family. As to quaternary structure, monomer. As to expression, expressed in roots, rosette leaves, stems, cauline leaves, flowers and developing seeds.

The protein resides in the cytoplasm. It catalyses the reaction [protein]-L-isoaspartate + S-adenosyl-L-methionine = [protein]-L-isoaspartate alpha-methyl ester + S-adenosyl-L-homocysteine. Its function is as follows. Catalyzes the methyl esterification of L-isoaspartyl residues in peptides and proteins that result from spontaneous decomposition of normal L-aspartyl and L-asparaginyl residues. It plays a role in the repair and/or degradation of damaged proteins. Contributes to seed longevity and germination vigor by limiting the abnormal accumulation of the L-isoaspartyl residues in seed proteins. The sequence is that of Protein-L-isoaspartate O-methyltransferase 1 (PIMT1) from Arabidopsis thaliana (Mouse-ear cress).